The chain runs to 228 residues: Sodium channel regulatory subunit beta-4 (228 aa).

Residues 1-30 form the signal peptide; sequence MSRAGNRGNTQARWLGIGLLGLFLLPMYLS. The Ig-like C2-type domain occupies 31–148; sequence LEVSVGKATT…KDLNNSATIF (118 aa). Residues 31–161 are Extracellular-facing; sequence LEVSVGKATT…VDKLEEVDNT (131 aa). N-linked (GlcNAc...) asparagine glycans are attached at residues asparagine 45, asparagine 71, asparagine 113, and asparagine 142. Residues cysteine 53 and cysteine 131 are joined by a disulfide bond. The chain crosses the membrane as a helical span at residues 162–182; it reads VTLIILAVVGGVIGLLVCILL. Topologically, residues 183–228 are cytoplasmic; that stretch reads LKKLITFILKKTREKKKECLVSSSGNDNTENGLPGSKAEEKPPTKV. The tract at residues 199 to 228 is disordered; the sequence is KECLVSSSGNDNTENGLPGSKAEEKPPTKV. The span at 203–213 shows a compositional bias: polar residues; it reads VSSSGNDNTEN. Residues 219 to 228 show a composition bias toward basic and acidic residues; sequence KAEEKPPTKV.

This sequence belongs to the sodium channel auxiliary subunit SCN4B (TC 8.A.17) family. In terms of assembly, a voltage-gated sodium (Nav) channel consists of an ion-conducting pore-forming alpha subunit functional on its own that is regulated by one or more beta subunits. The beta subunit SCN4B is disulfide-linked to the pore-forming alpha subunit. Interacts with SCN1A; regulatory subunit of SCN1A/Nav1.1. Interacts with SCN2A; regulatory subunit of SCN2A/Nav1.2. In terms of processing, contains an interchain disulfide bond with SCN2A. As to expression, expressed at a high level in dorsal root ganglia, at a lower level in brain, spinal cord, skeletal muscle and heart.

Its subcellular location is the cell membrane. In terms of biological role, regulatory subunit of multiple voltage-gated sodium (Nav) channels directly mediating the depolarization of excitable membranes. Navs, also called VGSCs (voltage-gated sodium channels) or VDSCs (voltage-dependent sodium channels), operate by switching between closed and open conformations depending on the voltage difference across the membrane. In the open conformation they allow Na(+) ions to selectively pass through the pore, along their electrochemical gradient. The influx of Na+ ions provokes membrane depolarization, initiating the propagation of electrical signals throughout cells and tissues. The accessory beta subunits participate in localization and functional modulation of the Nav channels. Modulates the activity of SCN1A/Nav1.1. Modulates the activity of SCN2A/Nav1.2. The polypeptide is Sodium channel regulatory subunit beta-4 (Rattus norvegicus (Rat)).